The following is a 256-amino-acid chain: Undecaprenyl-diphosphatase (256 aa).

7 helical membrane-spanning segments follow: residues 8–28 (VLGI…GHLI), 41–61 (FVKS…VVLY), 75–95 (IIAA…LIKG), 96–116 (FLIG…IILI), 175–195 (AEFS…YDLI), 208–228 (ILII…KWFL), and 236–256 (LKIF…FFLF).

The protein belongs to the UppP family.

It localises to the cell inner membrane. It catalyses the reaction di-trans,octa-cis-undecaprenyl diphosphate + H2O = di-trans,octa-cis-undecaprenyl phosphate + phosphate + H(+). In terms of biological role, catalyzes the dephosphorylation of undecaprenyl diphosphate (UPP). Confers resistance to bacitracin. The chain is Undecaprenyl-diphosphatase from Aquifex aeolicus (strain VF5).